We begin with the raw amino-acid sequence, 507 residues long: Glycerol kinase (507 aa).

Position 15 (Thr15) interacts with ADP. Positions 15, 16, and 17 each coordinate ATP. Thr15 serves as a coordination point for sn-glycerol 3-phosphate. Arg19 provides a ligand contact to ADP. Arg85, Glu86, Tyr137, and Asp250 together coordinate sn-glycerol 3-phosphate. Glycerol-binding residues include Arg85, Glu86, Tyr137, Asp250, and Gln251. ADP-binding residues include Thr272 and Gly316. ATP-binding residues include Thr272, Gly316, Gln320, and Gly417. Gly417 contributes to the ADP binding site.

Belongs to the FGGY kinase family.

It catalyses the reaction glycerol + ATP = sn-glycerol 3-phosphate + ADP + H(+). It functions in the pathway polyol metabolism; glycerol degradation via glycerol kinase pathway; sn-glycerol 3-phosphate from glycerol: step 1/1. Its activity is regulated as follows. Inhibited by fructose 1,6-bisphosphate (FBP). In terms of biological role, key enzyme in the regulation of glycerol uptake and metabolism. Catalyzes the phosphorylation of glycerol to yield sn-glycerol 3-phosphate. The chain is Glycerol kinase from Mycoplasmopsis pulmonis (strain UAB CTIP) (Mycoplasma pulmonis).